Reading from the N-terminus, the 545-residue chain is Resolvase homolog YokA (545 aa).

The region spanning 14–165 (NILGYLRRSR…GAKYTYAAQG (152 aa)) is the Resolvase/invertase-type recombinase catalytic domain. The stretch at 19 to 46 (LRRSRQDMEREKRTGEDTLTEQKELMNK) forms a coiled coil. Residue Ser-22 is the O-(5'-phospho-DNA)-serine intermediate of the active site. A DNA-binding region (recombinase) is located at residues 173–303 (PYGYQLNKKT…VKIANKVPLL (131 aa)). Positions 402–475 (NMKTKKQMSE…QDTQSEIDSN (74 aa)) form a coiled coil.

The protein in the N-terminal section; belongs to the site-specific recombinase resolvase family.

The chain is Resolvase homolog YokA (yokA) from Bacillus subtilis (strain 168).